The following is a 360-amino-acid chain: Malonyl CoA-acyl carrier protein transacylase, mitochondrial (360 aa).

Residues 1–24 (MKLLTFPGQGTSISISILKAIIRN) constitute a mitochondrion transit peptide. Active-site residues include S105 and H235.

This sequence belongs to the FabD family.

It localises to the mitochondrion. It catalyses the reaction holo-[ACP] + malonyl-CoA = malonyl-[ACP] + CoA. It participates in lipid metabolism; fatty acid biosynthesis. Functionally, involved in biosynthesis of fatty acids in mitochondria. This is Malonyl CoA-acyl carrier protein transacylase, mitochondrial (MCT1) from Saccharomyces cerevisiae (strain ATCC 204508 / S288c) (Baker's yeast).